Reading from the N-terminus, the 408-residue chain is Glyceraldehyde-3-phosphate dehydrogenase, testis-specific (408 aa).

Residues 1-73 (MSKRDIVLTN…TPPPKMVSVA (73 aa)) are testis-specific N-terminal extension. Positions 19-68 (QPCPVTRAPPPPEPKAEVEPQPQPEPTPVREEIKPPPPPLPPHPATPPPK) are disordered. Pro residues predominate over residues 53-68 (PPPPPLPPHPATPPPK). NAD(+) is bound by residues 85–86 (RI), Asp106, Lys151, Tyr173, and Ser193. D-glyceraldehyde 3-phosphate-binding positions include 223–225 (SCT), Thr254, 283–284 (TG), and Arg306. Cys224 serves as the catalytic Nucleophile. Asn388 is a binding site for NAD(+).

The protein belongs to the glyceraldehyde-3-phosphate dehydrogenase family. As to quaternary structure, homotetramer. Interacts with ARRB2; the interaction is detected in the nucleus upon OR1D2 stimulation. In terms of tissue distribution, testis specific.

It is found in the cytoplasm. It carries out the reaction D-glyceraldehyde 3-phosphate + phosphate + NAD(+) = (2R)-3-phospho-glyceroyl phosphate + NADH + H(+). It participates in carbohydrate degradation; glycolysis; pyruvate from D-glyceraldehyde 3-phosphate: step 1/5. In terms of biological role, may play an important role in regulating the switch between different pathways for energy production during spermiogenesis and in the spermatozoon. Required for sperm motility and male fertility. In Homo sapiens (Human), this protein is Glyceraldehyde-3-phosphate dehydrogenase, testis-specific (GAPDHS).